The chain runs to 115 residues: DNA-binding protein Ta0052 (115 aa).

A disordered region spans residues 1–41 (MDDDEELERIRRQQLESMQRQAMQEQMREEQEKQREAERAR). The segment covering 15–25 (LESMQRQAMQE) has biased composition (low complexity). Residues 26 to 41 (QMREEQEKQREAERAR) are compositionally biased toward basic and acidic residues.

It belongs to the PDCD5 family.

The polypeptide is DNA-binding protein Ta0052 (Thermoplasma acidophilum (strain ATCC 25905 / DSM 1728 / JCM 9062 / NBRC 15155 / AMRC-C165)).